Reading from the N-terminus, the 487-residue chain is N-succinylglutamate 5-semialdehyde dehydrogenase (487 aa).

Gly221–Gly226 lines the NAD(+) pocket. Residues Glu244 and Cys278 contribute to the active site.

Belongs to the aldehyde dehydrogenase family. AstD subfamily.

It carries out the reaction N-succinyl-L-glutamate 5-semialdehyde + NAD(+) + H2O = N-succinyl-L-glutamate + NADH + 2 H(+). The protein operates within amino-acid degradation; L-arginine degradation via AST pathway; L-glutamate and succinate from L-arginine: step 4/5. Functionally, catalyzes the NAD-dependent reduction of succinylglutamate semialdehyde into succinylglutamate. The polypeptide is N-succinylglutamate 5-semialdehyde dehydrogenase (Burkholderia orbicola (strain MC0-3)).